The primary structure comprises 354 residues: 5,10-methenyltetrahydromethanopterin hydrogenase (354 aa).

This sequence belongs to the HMD family.

The catalysed reaction is 5,10-methenyl-5,6,7,8-tetrahydromethanopterin + H2 = 5,10-methylenetetrahydromethanopterin + H(+). It participates in one-carbon metabolism; methanogenesis from CO(2); 5,10-methylene-5,6,7,8-tetrahydromethanopterin from 5,10-methenyl-5,6,7,8-tetrahydromethanopterin (hydrogen route): step 1/1. Functionally, catalyzes the reversible reduction of methenyl-H(4)MPT(+) to methylene-H(4)MPT. This Methanococcus maripaludis (strain C5 / ATCC BAA-1333) protein is 5,10-methenyltetrahydromethanopterin hydrogenase.